The following is a 473-amino-acid chain: Chaperone SurA (473 aa).

Positions 1 to 36 (MTNDRLFAGIARVLSVRPLAAALALLLTLPLIGVQA) are cleaved as a signal peptide. PpiC domains lie at 214 to 315 (SLAL…KVIE) and 326 to 425 (ITQT…QVLE).

It is found in the periplasm. It carries out the reaction [protein]-peptidylproline (omega=180) = [protein]-peptidylproline (omega=0). Its function is as follows. Chaperone involved in the correct folding and assembly of outer membrane proteins. Recognizes specific patterns of aromatic residues and the orientation of their side chains, which are found more frequently in integral outer membrane proteins. May act in both early periplasmic and late outer membrane-associated steps of protein maturation. This Polaromonas sp. (strain JS666 / ATCC BAA-500) protein is Chaperone SurA.